We begin with the raw amino-acid sequence, 180 residues long: Small ribosomal subunit protein bS16 (180 aa).

It belongs to the bacterial ribosomal protein bS16 family.

In Flavobacterium psychrophilum (strain ATCC 49511 / DSM 21280 / CIP 103535 / JIP02/86), this protein is Small ribosomal subunit protein bS16.